Consider the following 79-residue polypeptide: Small ribosomal subunit protein bS18 (79 aa).

This sequence belongs to the bacterial ribosomal protein bS18 family. Part of the 30S ribosomal subunit. Forms a tight heterodimer with protein bS6.

In terms of biological role, binds as a heterodimer with protein bS6 to the central domain of the 16S rRNA, where it helps stabilize the platform of the 30S subunit. In Streptococcus agalactiae serotype Ia (strain ATCC 27591 / A909 / CDC SS700), this protein is Small ribosomal subunit protein bS18.